A 454-amino-acid polypeptide reads, in one-letter code: GTPase Der (454 aa).

EngA-type G domains lie at 4 to 167 (AIVA…SEDK) and 188 to 363 (LQLA…ASWQ). Residues 10–17 (GKPNVGKS), 56–60 (DTPGL), 121–124 (NKTE), 194–201 (GRPNCGKS), 241–245 (DTAGV), and 306–309 (NKCD) each bind GTP. One can recognise a KH-like domain in the interval 364 to 450 (KRVTTGTLNQ…PVRLSFVKGK (87 aa)).

This sequence belongs to the TRAFAC class TrmE-Era-EngA-EngB-Septin-like GTPase superfamily. EngA (Der) GTPase family. Associates with the 50S ribosomal subunit.

In terms of biological role, GTPase that plays an essential role in the late steps of ribosome biogenesis. In Orientia tsutsugamushi (strain Boryong) (Rickettsia tsutsugamushi), this protein is GTPase Der.